The chain runs to 148 residues: Transcription antitermination protein NusB (148 aa).

Belongs to the NusB family.

Its function is as follows. Involved in transcription antitermination. Required for transcription of ribosomal RNA (rRNA) genes. Binds specifically to the boxA antiterminator sequence of the ribosomal RNA (rrn) operons. The chain is Transcription antitermination protein NusB from Desulfitobacterium hafniense (strain DSM 10664 / DCB-2).